The primary structure comprises 372 residues: Queuine tRNA-ribosyltransferase (372 aa).

Aspartate 89 serves as the catalytic Proton acceptor. Substrate is bound by residues 89–93 (DSGGF), aspartate 161, and glycine 232. Residues 262 to 268 (GIGDLPS) form an RNA binding region. Aspartate 281 (nucleophile) is an active-site residue. Residues 286–290 (TKAAR) are RNA binding; important for wobble base 34 recognition. Residues cysteine 319, cysteine 321, cysteine 324, and histidine 351 each contribute to the Zn(2+) site.

Belongs to the queuine tRNA-ribosyltransferase family. In terms of assembly, homodimer. Within each dimer, one monomer is responsible for RNA recognition and catalysis, while the other monomer binds to the replacement base PreQ1. The cofactor is Zn(2+).

The enzyme catalyses 7-aminomethyl-7-carbaguanine + guanosine(34) in tRNA = 7-aminomethyl-7-carbaguanosine(34) in tRNA + guanine. Its pathway is tRNA modification; tRNA-queuosine biosynthesis. Catalyzes the base-exchange of a guanine (G) residue with the queuine precursor 7-aminomethyl-7-deazaguanine (PreQ1) at position 34 (anticodon wobble position) in tRNAs with GU(N) anticodons (tRNA-Asp, -Asn, -His and -Tyr). Catalysis occurs through a double-displacement mechanism. The nucleophile active site attacks the C1' of nucleotide 34 to detach the guanine base from the RNA, forming a covalent enzyme-RNA intermediate. The proton acceptor active site deprotonates the incoming PreQ1, allowing a nucleophilic attack on the C1' of the ribose to form the product. After dissociation, two additional enzymatic reactions on the tRNA convert PreQ1 to queuine (Q), resulting in the hypermodified nucleoside queuosine (7-(((4,5-cis-dihydroxy-2-cyclopenten-1-yl)amino)methyl)-7-deazaguanosine). The polypeptide is Queuine tRNA-ribosyltransferase (Chlamydia abortus (strain DSM 27085 / S26/3) (Chlamydophila abortus)).